Consider the following 113-residue polypeptide: DNA-binding protein PTO0204 (113 aa).

Belongs to the PDCD5 family.

The protein is DNA-binding protein PTO0204 of Picrophilus torridus (strain ATCC 700027 / DSM 9790 / JCM 10055 / NBRC 100828 / KAW 2/3).